Reading from the N-terminus, the 284-residue chain is Probable palmitoyltransferase ZDHHC24 (284 aa).

Residues 1–18 (MGEPWAARGTEGAPARMP) are Cytoplasmic-facing. Residues 19 to 39 (VVFTALWAAVVVLELTYVMVL) traverse the membrane as a helical segment. Topologically, residues 40–52 (GPGPPPLEPLARA) are extracellular. A helical membrane pass occupies residues 53–73 (LQLALAAYQLLNLLGNMGLFL). Residues 74-137 (RSDPSIRGVM…GRCVGFHNYR (64 aa)) are Cytoplasmic-facing. Residues 94–144 (AYCYQCQSQVPPRSGHCSACRVCILRRDHHCRLLGRCVGFHNYRPFLCLLL) enclose the DHHC domain. The S-palmitoyl cysteine intermediate role is filled by Cys124. A helical transmembrane segment spans residues 138-158 (PFLCLLLHAAGVLLHISVLLS). Topologically, residues 159 to 166 (PALSALLQ) are extracellular. The helical transmembrane segment at 167-187 (AHSALYTVALLLLPWLMLLTG) threads the bilayer. The Cytoplasmic segment spans residues 188–195 (KVSLAQFA). The chain crosses the membrane as a helical span at residues 196–216 (LAFVVDTCVAGALLCGAGLLF). Over 217–284 (HGMLLLRGQT…TPTDVGLVTS (68 aa)) the chain is Extracellular.

It belongs to the DHHC palmitoyltransferase family.

It is found in the membrane. It carries out the reaction L-cysteinyl-[protein] + hexadecanoyl-CoA = S-hexadecanoyl-L-cysteinyl-[protein] + CoA. Functionally, probable palmitoyltransferase that could catalyze the addition of palmitate onto various protein substrates. This chain is Probable palmitoyltransferase ZDHHC24 (Zdhhc24), found in Rattus norvegicus (Rat).